A 172-amino-acid chain; its full sequence is Lipoprotein signal peptidase (172 aa).

4 helical membrane passes run 4–24 (LSSSAITTTWLAMIIIVLDQV), 39–59 (VAILPHLNLTLVYNYGAAFSF), 69–89 (WFFTALALVVGTALVIWLAKL), and 93–113 (WTLEVVAINLVLSGAIGNVID). Residues Asp-122 and Asp-140 contribute to the active site. The helical transmembrane segment at 136 to 156 (FNVADMGISIGAVLLIISEFW) threads the bilayer.

Belongs to the peptidase A8 family.

It is found in the cell inner membrane. The catalysed reaction is Release of signal peptides from bacterial membrane prolipoproteins. Hydrolyzes -Xaa-Yaa-Zaa-|-(S,diacylglyceryl)Cys-, in which Xaa is hydrophobic (preferably Leu), and Yaa (Ala or Ser) and Zaa (Gly or Ala) have small, neutral side chains.. It participates in protein modification; lipoprotein biosynthesis (signal peptide cleavage). In terms of biological role, this protein specifically catalyzes the removal of signal peptides from prolipoproteins. The protein is Lipoprotein signal peptidase of Hydrogenovibrio crunogenus (strain DSM 25203 / XCL-2) (Thiomicrospira crunogena).